The chain runs to 1112 residues: Rho GTPase-activating protein 7 (1112 aa).

The region spanning 37-104 (LAEIEAKEAC…LNKCAVMKLE (68 aa)) is the SAM domain. Phosphoserine occurs at positions 112, 115, and 155. Disordered regions lie at residues 146-203 (SPKQ…APAR), 318-350 (RSIS…RTRS), 405-459 (PKAL…VSSR), and 512-574 (SDEG…GVGA). Over residues 183 to 193 (VHSTGSLTTHA) the composition is skewed to polar residues. The interval 296-468 (QLNCVEISAL…RLSIYDNVPG (173 aa)) is focal adhesion-targeting (FAT). Composition is skewed to low complexity over residues 320–348 (ISSS…VTRT) and 409–423 (SNGS…SSVN). Ser-343 is subject to Phosphoserine. A compositionally biased stretch (basic and acidic residues) spans 437–446 (LRRENSSPKE). Positions 520–532 (ALDSVSPCPSSPK) are enriched in polar residues. A compositionally biased stretch (basic and acidic residues) spans 534 to 544 (IHLDVDNDRAT). Residues 547-556 (DLDSTGNSLN) are compositionally biased toward polar residues. Positions 635–657 (KHGFSWAVPKFMKRIKVPDYKDR) are polybasic cluster (PBR). The 207-residue stretch at 662 to 868 (VPLTVNVQRT…HMIAECKKLF (207 aa)) folds into the Rho-GAP domain. An START domain is found at 898–1105 (CNDDSADYQH…RDSFSHQNTE (208 aa)).

Interacts with EF1A1, facilitates EF1A1 distribution to the membrane periphery and ruffles upon growth factor stimulation and suppresses cell migration. Interacts with tensin TNS1 (via N-terminus); the interaction is decreased by phosphorylation of TNS1. Interacts with TNS3 and PTEN; in resting cells, interacts with TNS3 (via C2 tensin-type domain) but, following growth factor stimulation, TNS3 and PTEN are phosphorylated which leads to weakened interaction with TNS3 and enhanced interaction with PTEN. Interacts (via C-terminus) with tensin TNS4 (via SH2 domain); the interaction is independent of tyrosine phosphorylation of DLC1.

It localises to the cytoplasm. Its subcellular location is the cell junction. It is found in the focal adhesion. The protein resides in the membrane. Functions as a GTPase-activating protein for the small GTPases RHOA, RHOB, RHOC and CDC42, terminating their downstream signaling. This induces morphological changes and detachment through cytoskeletal reorganization, playing a critical role in biological processes such as cell migration and proliferation. Also functions in vivo as an activator of the phospholipase PLCD1. Active DLC1 increases cell migration velocity but reduces directionality. Required for growth factor-induced epithelial cell migration; in resting cells, interacts with TNS3 while PTEN interacts with the p85 regulatory subunit of the PI3K kinase complex but growth factor stimulation induces phosphorylation of TNS3 and PTEN, causing them to change their binding preference so that PTEN interacts with DLC1 and TNS3 interacts with p85. The PTEN-DLC1 complex translocates to the posterior of migrating cells to activate RHOA while the TNS3-p85 complex translocates to the leading edge of migrating cells to promote RAC1 activation. The protein is Rho GTPase-activating protein 7 (DLC1) of Bos taurus (Bovine).